The chain runs to 105 residues: Thiosulfate sulfurtransferase GlpE (105 aa).

A Rhodanese domain is found at Asp16–Glu104. Cys64 serves as the catalytic Cysteine persulfide intermediate.

This sequence belongs to the GlpE family.

The protein localises to the cytoplasm. The catalysed reaction is thiosulfate + hydrogen cyanide = thiocyanate + sulfite + 2 H(+). The enzyme catalyses thiosulfate + [thioredoxin]-dithiol = [thioredoxin]-disulfide + hydrogen sulfide + sulfite + 2 H(+). Transferase that catalyzes the transfer of sulfur from thiosulfate to thiophilic acceptors such as cyanide or dithiols. May function in a CysM-independent thiosulfate assimilation pathway by catalyzing the conversion of thiosulfate to sulfite, which can then be used for L-cysteine biosynthesis. The polypeptide is Thiosulfate sulfurtransferase GlpE (Pseudoalteromonas translucida (strain TAC 125)).